Here is a 133-residue protein sequence, read N- to C-terminus: ATP synthase epsilon chain, chloroplastic (133 aa).

This sequence belongs to the ATPase epsilon chain family. F-type ATPases have 2 components, CF(1) - the catalytic core - and CF(0) - the membrane proton channel. CF(1) has five subunits: alpha(3), beta(3), gamma(1), delta(1), epsilon(1). CF(0) has three main subunits: a, b and c.

Its subcellular location is the plastid. It localises to the chloroplast thylakoid membrane. Functionally, produces ATP from ADP in the presence of a proton gradient across the membrane. This is ATP synthase epsilon chain, chloroplastic from Nicotiana tomentosiformis (Tobacco).